A 251-amino-acid polypeptide reads, in one-letter code: S-acyl fatty acid synthase thioesterase, medium chain (251 aa).

Residues Ser-90 and His-226 contribute to the active site.

Belongs to the thioesterase family.

It catalyses the reaction (9Z)-octadecenoyl-[ACP] + H2O = (9Z)-octadecenoate + holo-[ACP] + H(+). Its function is as follows. In fatty acid biosynthesis chain termination and release of the free fatty acid product is achieved by hydrolysis of the thio ester by a thioesterase I, a component of the fatty acid synthetase complex. The chain length of the released fatty acid is usually C16. However, in the mammary glands of non-ruminant mammals, and in the uropygial gland of certain waterfowl there exists a second thioesterase which releases medium-chain length fatty acids (C8 to C2). The polypeptide is S-acyl fatty acid synthase thioesterase, medium chain (Anas platyrhynchos (Mallard)).